We begin with the raw amino-acid sequence, 365 residues long: Alanine racemase (365 aa).

Lysine 32 (proton acceptor; specific for D-alanine) is an active-site residue. Lysine 32 bears the N6-(pyridoxal phosphate)lysine mark. A substrate-binding site is contributed by arginine 128. Tyrosine 257 functions as the Proton acceptor; specific for L-alanine in the catalytic mechanism. Residue methionine 305 participates in substrate binding.

It belongs to the alanine racemase family. Requires pyridoxal 5'-phosphate as cofactor.

The catalysed reaction is L-alanine = D-alanine. It functions in the pathway amino-acid biosynthesis; D-alanine biosynthesis; D-alanine from L-alanine: step 1/1. Functionally, catalyzes the interconversion of L-alanine and D-alanine. May also act on other amino acids. The chain is Alanine racemase (alr) from Francisella tularensis subsp. holarctica (strain LVS).